A 126-amino-acid chain; its full sequence is Small ribosomal subunit protein uS8 (126 aa).

This sequence belongs to the universal ribosomal protein uS8 family. In terms of assembly, part of the 30S ribosomal subunit. Contacts proteins S5 and S12.

One of the primary rRNA binding proteins, it binds directly to 16S rRNA central domain where it helps coordinate assembly of the platform of the 30S subunit. The chain is Small ribosomal subunit protein uS8 from Nitratidesulfovibrio vulgaris (strain ATCC 29579 / DSM 644 / CCUG 34227 / NCIMB 8303 / VKM B-1760 / Hildenborough) (Desulfovibrio vulgaris).